The chain runs to 183 residues: NADH dehydrogenase [ubiquinone] iron-sulfur protein 4, mitochondrial (183 aa).

Residues 1-28 (MSALRQVMCRSTASLQLYQANRAAAARW) constitute a mitochondrion transit peptide. Ser181 is modified (phosphoserine).

It belongs to the complex I NDUFS4 subunit family.

It is found in the mitochondrion inner membrane. In terms of biological role, accessory subunit of the mitochondrial membrane respiratory chain NADH dehydrogenase (Complex I), that is believed not to be involved in catalysis. Complex I functions in the transfer of electrons from NADH to the respiratory chain. The immediate electron acceptor for the enzyme is believed to be ubiquinone. This Drosophila melanogaster (Fruit fly) protein is NADH dehydrogenase [ubiquinone] iron-sulfur protein 4, mitochondrial.